A 399-amino-acid chain; its full sequence is Elongation factor Tu (399 aa).

Residues 10-204 (KPHVNIGTIG…AVDEAIPEPE (195 aa)) enclose the tr-type G domain. The interval 19–26 (GHVDHGKT) is G1. A GTP-binding site is contributed by 19-26 (GHVDHGKT). Thr-26 contributes to the Mg(2+) binding site. Positions 60–64 (GITIN) are G2. The G3 stretch occupies residues 81–84 (DCPG). GTP is bound by residues 81–85 (DCPGH) and 136–139 (NKCD). Residues 136-139 (NKCD) are G4. The tract at residues 174 to 176 (SGL) is G5.

It belongs to the TRAFAC class translation factor GTPase superfamily. Classic translation factor GTPase family. EF-Tu/EF-1A subfamily. In terms of assembly, monomer.

Its subcellular location is the cytoplasm. The enzyme catalyses GTP + H2O = GDP + phosphate + H(+). In terms of biological role, GTP hydrolase that promotes the GTP-dependent binding of aminoacyl-tRNA to the A-site of ribosomes during protein biosynthesis. This is Elongation factor Tu from Parasynechococcus marenigrum (strain WH8102).